We begin with the raw amino-acid sequence, 194 residues long: Flagellar transcriptional regulator FlhC (194 aa).

Residues Cys-139, Cys-142, Cys-159, and Cys-162 each coordinate Zn(2+).

Belongs to the FlhC family. Heterohexamer composed of two FlhC and four FlhD subunits. Each FlhC binds a FlhD dimer, forming a heterotrimer, and a hexamer assembles by dimerization of two heterotrimers. The cofactor is Zn(2+).

It is found in the cytoplasm. Its function is as follows. Functions in complex with FlhD as a master transcriptional regulator that regulates transcription of several flagellar and non-flagellar operons by binding to their promoter region. Activates expression of class 2 flagellar genes, including fliA, which is a flagellum-specific sigma factor that turns on the class 3 genes. Also regulates genes whose products function in a variety of physiological pathways. This chain is Flagellar transcriptional regulator FlhC, found in Serratia marcescens.